Here is a 349-residue protein sequence, read N- to C-terminus: Anthranilate phosphoribosyltransferase (349 aa).

Residues Gly84, 87–88 (GD), Thr92, 94–97 (NIST), 112–120 (KHGNRAASS), and Ser124 each bind 5-phospho-alpha-D-ribose 1-diphosphate. Gly84 contributes to the anthranilate binding site. Mg(2+) is bound at residue Ser96. Residue Asn115 participates in anthranilate binding. Arg170 serves as a coordination point for anthranilate. Mg(2+) is bound by residues Asp228 and Glu229.

This sequence belongs to the anthranilate phosphoribosyltransferase family. In terms of assembly, homodimer. Mg(2+) serves as cofactor.

The enzyme catalyses N-(5-phospho-beta-D-ribosyl)anthranilate + diphosphate = 5-phospho-alpha-D-ribose 1-diphosphate + anthranilate. Its pathway is amino-acid biosynthesis; L-tryptophan biosynthesis; L-tryptophan from chorismate: step 2/5. Its function is as follows. Catalyzes the transfer of the phosphoribosyl group of 5-phosphorylribose-1-pyrophosphate (PRPP) to anthranilate to yield N-(5'-phosphoribosyl)-anthranilate (PRA). The polypeptide is Anthranilate phosphoribosyltransferase (Leifsonia xyli subsp. xyli (strain CTCB07)).